A 349-amino-acid polypeptide reads, in one-letter code: Probable G-protein coupled receptor 21 (349 aa).

The Extracellular portion of the chain corresponds to 1–32; it reads MNSTWDGNQSSHPFCLLALGYLETVRFCLLEV. N-linked (GlcNAc...) asparagine glycans are attached at residues N2 and N8. A helical transmembrane segment spans residues 33–53; it reads LIIVFLTVLIISGNIIVIFVF. Residues 54 to 75 lie on the Cytoplasmic side of the membrane; the sequence is HCAPLLNHHSTSYFIQTMAYAD. A helical transmembrane segment spans residues 76 to 96; sequence LLVGVSCLVPSLSLLYYPLPI. Over 97–104 the chain is Extracellular; that stretch reads EEAMTCQV. A helical membrane pass occupies residues 105–125; it reads FGFVVSVLKSISMASLACISI. The Cytoplasmic portion of the chain corresponds to 126–147; sequence DRYIAITKPLTYNTLVTPWRLR. A helical membrane pass occupies residues 148-168; the sequence is LCIFLIWLYSTLVFLPSFFHW. The Extracellular portion of the chain corresponds to 169–191; sequence GKPGYHGDVFQWCAESWHTNSYF. Residues 192-212 form a helical membrane-spanning segment; it reads TLFIVMMLYAPAALIVCFTYF. The Cytoplasmic portion of the chain corresponds to 213-252; that stretch reads NIFRICQQHTKEISERQARFSSQNGETGEPQTCPDKRYAM. Residues 253 to 273 traverse the membrane as a helical segment; it reads VLFRITSVFYVLWLPYIIYFL. Over 274–283 the chain is Extracellular; that stretch reads LESSTGCSSR. The chain crosses the membrane as a helical span at residues 284–304; it reads LASFLTTWLAISNSFCNCIIY. Over 305–349 the chain is Cytoplasmic; it reads SLSNSVFQRGLKGLSGSLCTSCASHTTAKDPYTVRCKGPPNGSHI.

The protein belongs to the G-protein coupled receptor 1 family.

Its subcellular location is the cell membrane. In terms of biological role, orphan receptor. The chain is Probable G-protein coupled receptor 21 (Gpr21) from Mus musculus (Mouse).